The chain runs to 195 residues: Antigenic thaumatin-like protein ARB_01183 (195 aa).

A signal peptide spans 1–22 (MHSNTAVIALSALAALVPAALA). Disulfide bonds link Cys-125–Cys-153 and Cys-130–Cys-137. Residues 171–195 (GPKKMFKPVQEKAANRPRHPHARPE) are disordered. Basic residues predominate over residues 185–195 (NRPRHPHARPE).

Belongs to the thaumatin family.

The protein localises to the secreted. Might be involved in the inhibition of growth of fungal competitors and pathogenicity. This is Antigenic thaumatin-like protein ARB_01183 from Arthroderma benhamiae (strain ATCC MYA-4681 / CBS 112371) (Trichophyton mentagrophytes).